A 200-amino-acid polypeptide reads, in one-letter code: Glycerol-3-phosphate acyltransferase (200 aa).

The next 5 membrane-spanning stretches (helical) occupy residues 4–24 (FALCYMFAAYLLGSISSAVIV), 53–73 (WAALAVFVFDVLKGMIPVWCG), 80–100 (QFELGMVALGACLGHIFPIFF), 115–135 (IAPIGWGVMATMLGTWVLVFV), and 138–158 (GYSSLSAVISALLVPLYVWWF).

This sequence belongs to the PlsY family. Probably interacts with PlsX.

It is found in the cell inner membrane. It carries out the reaction an acyl phosphate + sn-glycerol 3-phosphate = a 1-acyl-sn-glycero-3-phosphate + phosphate. It participates in lipid metabolism; phospholipid metabolism. Catalyzes the transfer of an acyl group from acyl-phosphate (acyl-PO(4)) to glycerol-3-phosphate (G3P) to form lysophosphatidic acid (LPA). This enzyme utilizes acyl-phosphate as fatty acyl donor, but not acyl-CoA or acyl-ACP. This is Glycerol-3-phosphate acyltransferase from Actinobacillus succinogenes (strain ATCC 55618 / DSM 22257 / CCUG 43843 / 130Z).